The primary structure comprises 475 residues: Trifunctional enzyme subunit beta, mitochondrial (475 aa).

The transit peptide at 1-34 (MTTILTSTFRNLSTTSKWALRFSVRPLSCSSQVQ) directs the protein to the mitochondrion. An N6-succinyllysine modification is found at Lys-53. N6-acetyllysine; alternate is present on Lys-73. Lys-73 is subject to N6-succinyllysine; alternate. The active-site Acyl-thioester intermediate is Cys-139. An intramembrane segment occupies 174-221 (IRHSRNMRKMMLDLNKAKTLAQRLSLLTKFRLNFLSPELPAVAEFSTN). The residue at position 189 (Lys-189) is an N6-acetyllysine; alternate. Lys-189 carries the post-translational modification N6-succinyllysine; alternate. Lys-191, Lys-273, and Lys-292 each carry N6-succinyllysine. Lys-294 is subject to N6-acetyllysine; alternate. An N6-succinyllysine; alternate modification is found at Lys-294. Lys-299 is subject to N6-acetyllysine. Lys-333 carries the N6-acetyllysine; alternate modification. An N6-succinyllysine; alternate modification is found at Lys-333. N6-acetyllysine occurs at positions 349 and 362. Cys-459 (proton donor/acceptor) is an active-site residue.

It belongs to the thiolase-like superfamily. Thiolase family. In terms of assembly, heterotetramer of 2 alpha/HADHA and 2 beta/HADHB subunits; forms the mitochondrial trifunctional enzyme. Also purified as higher order heterooligomers including a 4 alpha/HADHA and 4 beta/HADHB heterooligomer which physiological significance remains unclear. The mitochondrial trifunctional enzyme interacts with MTLN. Interacts with RSAD2/viperin.

The protein resides in the mitochondrion. It localises to the mitochondrion inner membrane. Its subcellular location is the mitochondrion outer membrane. It is found in the endoplasmic reticulum. It carries out the reaction an acyl-CoA + acetyl-CoA = a 3-oxoacyl-CoA + CoA. The catalysed reaction is butanoyl-CoA + acetyl-CoA = 3-oxohexanoyl-CoA + CoA. It catalyses the reaction hexanoyl-CoA + acetyl-CoA = 3-oxooctanoyl-CoA + CoA. The enzyme catalyses octanoyl-CoA + acetyl-CoA = 3-oxodecanoyl-CoA + CoA. It carries out the reaction decanoyl-CoA + acetyl-CoA = 3-oxododecanoyl-CoA + CoA. The catalysed reaction is dodecanoyl-CoA + acetyl-CoA = 3-oxotetradecanoyl-CoA + CoA. It catalyses the reaction tetradecanoyl-CoA + acetyl-CoA = 3-oxohexadecanoyl-CoA + CoA. The protein operates within lipid metabolism; fatty acid beta-oxidation. Its function is as follows. Mitochondrial trifunctional enzyme catalyzes the last three of the four reactions of the mitochondrial beta-oxidation pathway. The mitochondrial beta-oxidation pathway is the major energy-producing process in tissues and is performed through four consecutive reactions breaking down fatty acids into acetyl-CoA. Among the enzymes involved in this pathway, the trifunctional enzyme exhibits specificity for long-chain fatty acids. Mitochondrial trifunctional enzyme is a heterotetrameric complex composed of two proteins, the trifunctional enzyme subunit alpha/HADHA carries the 2,3-enoyl-CoA hydratase and the 3-hydroxyacyl-CoA dehydrogenase activities, while the trifunctional enzyme subunit beta/HADHB described here bears the 3-ketoacyl-CoA thiolase activity. The protein is Trifunctional enzyme subunit beta, mitochondrial (Hadhb) of Rattus norvegicus (Rat).